The primary structure comprises 77 residues: Liver-expressed antimicrobial peptide 2 (77 aa).

A signal peptide spans 1–22; that stretch reads MWHLKLFAVLVICLLLAVQVHG. Residues 23–37 constitute a propeptide that is removed on maturation; that stretch reads SPIPELSSAKRRPRR. 2 disulfides stabilise this stretch: C54–C65 and C60–C70.

Belongs to the LEAP2 family.

The protein localises to the secreted. Has an antimicrobial activity. The chain is Liver-expressed antimicrobial peptide 2 (LEAP2) from Sus scrofa (Pig).